A 1400-amino-acid polypeptide reads, in one-letter code: DNA-directed RNA polymerase subunit beta' (1400 aa).

Zn(2+)-binding residues include C71, C73, C86, and C89. Residues D462, D464, and D466 each contribute to the Mg(2+) site. Zn(2+)-binding residues include C820, C893, C900, and C903.

It belongs to the RNA polymerase beta' chain family. The RNAP catalytic core consists of 2 alpha, 1 beta, 1 beta' and 1 omega subunit. When a sigma factor is associated with the core the holoenzyme is formed, which can initiate transcription. Requires Mg(2+) as cofactor. It depends on Zn(2+) as a cofactor.

The catalysed reaction is RNA(n) + a ribonucleoside 5'-triphosphate = RNA(n+1) + diphosphate. DNA-dependent RNA polymerase catalyzes the transcription of DNA into RNA using the four ribonucleoside triphosphates as substrates. The protein is DNA-directed RNA polymerase subunit beta' of Methylobacterium sp. (strain 4-46).